The primary structure comprises 120 residues: Basic phospholipase A2 homolog piratoxin-3 (120 aa).

7 cysteine pairs are disulfide-bonded: C26-C113, C28-C44, C43-C94, C49-C120, C50-C87, C57-C81, and C75-C85. The segment at 104–115 (KKYRYHLKPCKK) is important for membrane-damaging activities in eukaryotes and bacteria; heparin-binding.

Belongs to the phospholipase A2 family. Group II subfamily. D49 sub-subfamily. In terms of assembly, homodimer; non-covalently linked (probable alternative/compact dimer conformation). Expressed by the venom gland.

It is found in the secreted. Snake venom phospholipase A2 (PLA2) that lacks enzymatic activity. Shows high myotoxin activities. Also has anticoagulant activity. A model of myotoxic mechanism has been proposed: an apo Lys49-PLA2 is activated by the entrance of a hydrophobic molecule (e.g. fatty acid) at the hydrophobic channel of the protein leading to a reorientation of a monomer. This reorientation causes a transition between 'inactive' to 'active' states, causing alignment of C-terminal and membrane-docking sites (MDoS) side-by-side and putting the membrane-disruption sites (MDiS) in the same plane, exposed to solvent and in a symmetric position for both monomers. The MDoS region stabilizes the toxin on membrane by the interaction of charged residues with phospholipid head groups. Subsequently, the MDiS region destabilizes the membrane with penetration of hydrophobic residues. This insertion causes a disorganization of the membrane, allowing an uncontrolled influx of ions (i.e. calcium and sodium), and eventually triggering irreversible intracellular alterations and cell death. The sequence is that of Basic phospholipase A2 homolog piratoxin-3 from Bothrops pirajai (Piraja's lancehead).